The primary structure comprises 399 residues: Elongation factor Tu (399 aa).

Residues 10–209 (KPHVNIGTIG…AVDDYIPTPA (200 aa)) form the tr-type G domain. The tract at residues 19-26 (GHVDHGKT) is G1. 19-26 (GHVDHGKT) contributes to the GTP binding site. A Mg(2+)-binding site is contributed by Thr-26. The interval 60–64 (GITIA) is G2. The interval 81-84 (DCPG) is G3. GTP-binding positions include 81–85 (DCPGH) and 136–139 (NKAD). The interval 136 to 139 (NKAD) is G4. The tract at residues 174–176 (SAL) is G5.

It belongs to the TRAFAC class translation factor GTPase superfamily. Classic translation factor GTPase family. EF-Tu/EF-1A subfamily. As to quaternary structure, monomer.

Its subcellular location is the cytoplasm. The catalysed reaction is GTP + H2O = GDP + phosphate + H(+). GTP hydrolase that promotes the GTP-dependent binding of aminoacyl-tRNA to the A-site of ribosomes during protein biosynthesis. This Campylobacter lari (strain RM2100 / D67 / ATCC BAA-1060) protein is Elongation factor Tu.